The following is a 940-amino-acid chain: Isoleucine--tRNA ligase (940 aa).

Residues Pro-58 to His-68 carry the 'HIGH' region motif. L-isoleucyl-5'-AMP is bound at residue Glu-564. The short motif at Lys-605–Ser-609 is the 'KMSKS' region element. Lys-608 serves as a coordination point for ATP. The Zn(2+) site is built by Cys-903, Cys-906, Cys-923, and Cys-926.

This sequence belongs to the class-I aminoacyl-tRNA synthetase family. IleS type 1 subfamily. Monomer. Zn(2+) is required as a cofactor.

The protein resides in the cytoplasm. It carries out the reaction tRNA(Ile) + L-isoleucine + ATP = L-isoleucyl-tRNA(Ile) + AMP + diphosphate. Its function is as follows. Catalyzes the attachment of isoleucine to tRNA(Ile). As IleRS can inadvertently accommodate and process structurally similar amino acids such as valine, to avoid such errors it has two additional distinct tRNA(Ile)-dependent editing activities. One activity is designated as 'pretransfer' editing and involves the hydrolysis of activated Val-AMP. The other activity is designated 'posttransfer' editing and involves deacylation of mischarged Val-tRNA(Ile). The protein is Isoleucine--tRNA ligase of Shewanella halifaxensis (strain HAW-EB4).